A 132-amino-acid polypeptide reads, in one-letter code: UPF0299 membrane protein KPN78578_25390 (132 aa).

4 helical membrane passes run 5 to 25 (LTII…LYAG), 38 to 60 (GSII…PQWV), 66 to 86 (ILIR…MQYW), and 93 to 113 (LGPV…VVSW).

It belongs to the UPF0299 family.

It localises to the cell inner membrane. In Klebsiella pneumoniae subsp. pneumoniae (strain ATCC 700721 / MGH 78578), this protein is UPF0299 membrane protein KPN78578_25390.